Here is a 103-residue protein sequence, read N- to C-terminus: Large ribosomal subunit protein bL21 (103 aa).

It belongs to the bacterial ribosomal protein bL21 family. As to quaternary structure, part of the 50S ribosomal subunit. Contacts protein L20.

Its function is as follows. This protein binds to 23S rRNA in the presence of protein L20. This is Large ribosomal subunit protein bL21 from Herminiimonas arsenicoxydans.